A 648-amino-acid polypeptide reads, in one-letter code: Biosynthetic arginine decarboxylase (648 aa).

Residue lysine 109 is modified to N6-(pyridoxal phosphate)lysine. 291–301 (IDVGGGLGIDF) contacts substrate.

Belongs to the Orn/Lys/Arg decarboxylase class-II family. SpeA subfamily. It depends on Mg(2+) as a cofactor. Pyridoxal 5'-phosphate is required as a cofactor.

The enzyme catalyses L-arginine + H(+) = agmatine + CO2. The protein operates within amine and polyamine biosynthesis; agmatine biosynthesis; agmatine from L-arginine: step 1/1. In terms of biological role, catalyzes the biosynthesis of agmatine from arginine. This Prochlorococcus marinus (strain MIT 9515) protein is Biosynthetic arginine decarboxylase.